The primary structure comprises 231 residues: MAEPISLLLVDDEPGVRESVQAFLEDSGDFKVDLAANATEAWDYLQHHLPALVISDIMMPQVDGYQFLQKLREDARFQSLPVVFLTARGMTGDRIQGYQTGCDAFLSKPFDPDELEAIVRNLLARQQASSDAGSESAKLQEIYQEIRALKEQIGQPSGIHTTPSPIKLDFTPREQSVLDLVSQGLMNKEIAAQLKTSVRNVEKYVSRLFTKTGTNSRTELVRFALQHGLTE.

Residues 6–123 (SLLLVDDEPG…ELEAIVRNLL (118 aa)) enclose the Response regulatory domain. D56 is modified (4-aspartylphosphate). In terms of domain architecture, HTH luxR-type spans 163 to 228 (PSPIKLDFTP…ELVRFALQHG (66 aa)). The H-T-H motif DNA-binding region spans 187–206 (NKEIAAQLKTSVRNVEKYVS).

Interacts with histidine kinase Hik2; may accept phosphate from Hik2.

In terms of biological role, member of at least 2 two-component regulatory systems Hik2/Rre1 and Hik34/Rre1. Responds to hyperosmotic stress, regulates expression of at least 24 genes including dnaK2 and hspA with Hik34 and sigB (sll0306), sll0528, slr1119, slr0852 and ssr3188 with Hik2. Responds to salt stress, regulates expression of at least 24 genes including adhA, dnaK2 and hspA with Hik34. Binds the adhA promoter. Phosphorylated by Hik2 in vitro. Phosphorylated protein has 10-fold higher affinity for DNA than unphosphorylated protein. In Synechocystis sp. (strain ATCC 27184 / PCC 6803 / Kazusa), this protein is Response regulator Rre1.